Here is a 673-residue protein sequence, read N- to C-terminus: DNA mismatch repair protein MutL (673 aa).

This sequence belongs to the DNA mismatch repair MutL/HexB family.

In terms of biological role, this protein is involved in the repair of mismatches in DNA. It is required for dam-dependent methyl-directed DNA mismatch repair. May act as a 'molecular matchmaker', a protein that promotes the formation of a stable complex between two or more DNA-binding proteins in an ATP-dependent manner without itself being part of a final effector complex. This chain is DNA mismatch repair protein MutL, found in Ehrlichia chaffeensis (strain ATCC CRL-10679 / Arkansas).